Reading from the N-terminus, the 469-residue chain is Glutamate--tRNA ligase 2 (469 aa).

The 'HIGH' region signature appears at 8–18; sequence PSPTGFLHVGG. A 'KMSKS' region motif is present at residues 250–254; that stretch reads KLSKR. Lys253 provides a ligand contact to ATP.

Belongs to the class-I aminoacyl-tRNA synthetase family. Glutamate--tRNA ligase type 1 subfamily. In terms of assembly, monomer.

It is found in the cytoplasm. The enzyme catalyses tRNA(Glu) + L-glutamate + ATP = L-glutamyl-tRNA(Glu) + AMP + diphosphate. Functionally, catalyzes the attachment of glutamate to tRNA(Glu) in a two-step reaction: glutamate is first activated by ATP to form Glu-AMP and then transferred to the acceptor end of tRNA(Glu). This Thermotoga sp. (strain RQ2) protein is Glutamate--tRNA ligase 2.